We begin with the raw amino-acid sequence, 101 residues long: MILEHVLVLSAYLFLIGLYGLITSRNMVRALMCLELILNAVNMNFVTFSDFFDNSELKGDIFCIFVIAIAAAEAAIGLAIVSSIYRNRKSTRINQSTLLNK.

The next 3 helical transmembrane spans lie at 2 to 22 (ILEH…YGLI), 32 to 52 (MCLE…SDFF), and 61 to 81 (IFCI…LAIV).

The protein belongs to the complex I subunit 4L family. In terms of assembly, NDH is composed of at least 16 different subunits, 5 of which are encoded in the nucleus.

The protein localises to the plastid. Its subcellular location is the chloroplast thylakoid membrane. It carries out the reaction a plastoquinone + NADH + (n+1) H(+)(in) = a plastoquinol + NAD(+) + n H(+)(out). The enzyme catalyses a plastoquinone + NADPH + (n+1) H(+)(in) = a plastoquinol + NADP(+) + n H(+)(out). In terms of biological role, NDH shuttles electrons from NAD(P)H:plastoquinone, via FMN and iron-sulfur (Fe-S) centers, to quinones in the photosynthetic chain and possibly in a chloroplast respiratory chain. The immediate electron acceptor for the enzyme in this species is believed to be plastoquinone. Couples the redox reaction to proton translocation, and thus conserves the redox energy in a proton gradient. The chain is NAD(P)H-quinone oxidoreductase subunit 4L, chloroplastic from Crucihimalaya wallichii (Rock-cress).